The following is a 562-amino-acid chain: Protein FAM222B (562 aa).

2 stretches are compositionally biased toward low complexity: residues 155-167 (QQAL…LAHA) and 183-201 (ALSH…HPQP). Disordered stretches follow at residues 155–203 (QQAL…QPMA), 219–245 (LQHP…VTVS), and 537–562 (AHRA…PGYR).

This sequence belongs to the FAM222 family.

The chain is Protein FAM222B (FAM222B) from Homo sapiens (Human).